A 364-amino-acid chain; its full sequence is MSERVVVVGAGVIGLLTARELALAGLRVTLVERGESGREASWAGGGIVSPLYPWRYSPAVTALAHWSQDFYPALGQRLLDETGLDPEVHTVGLYWLDLDDQTEALQWARKHTRPLKEVPIEEAYAAVPGLGAGFQRAVYMSGVANVRNPRLARSLRASLQQFANLELHEQTEVRGWLRDGDRVVGVATSRGEIRGDKVLLAAGAWSGELLKPLGLELPVVPVKGQMILYKCAADFLPRMVLAKGRYAIPRRDGHILIGSTLEHSGFDKTPTDEAQESLRASAAELLPELADMQPVAHWAGLRPGSPEGIPYIGPVPGFDGLWLNTGHYRNGLVLAPASCRLLADLMSGREPIIDPAPYAPAGRL.

Residues 12–13 (VI), 32–33 (ER), 40–41 (AS), 45–47 (GGI), and valine 173 each bind FAD. Arginine 302 is a substrate binding site. FAD is bound at residue 327–333 (HYRNGLV).

This sequence belongs to the DAO family. ThiO subfamily. Monomer. It depends on FAD as a cofactor.

It catalyses the reaction glycine + O2 + H2O = glyoxylate + H2O2 + NH4(+). The enzyme catalyses sarcosine + O2 + H2O = methylamine + glyoxylate + H2O2. It participates in cofactor biosynthesis; thiamine diphosphate biosynthesis. Catalyzes the oxidation of glycine, leading to glyoxyl imine and hydrogen peroxide as primary products; glyoxyl imine is used for the biosynthesis of the thiazole ring of thiamine. Otherwise, glyoxyl imine is spontaneously hydrolyzed in water to produce glyoxylate and ammonia. Can also use sarcosine (N-methylglycine) as substrate. This is Glycine oxidase from Pseudomonas aeruginosa (strain ATCC 15692 / DSM 22644 / CIP 104116 / JCM 14847 / LMG 12228 / 1C / PRS 101 / PAO1).